The chain runs to 65 residues: Photosystem II reaction center protein H (65 aa).

Residues G27–L47 form a helical membrane-spanning segment.

This sequence belongs to the PsbH family. As to quaternary structure, PSII is composed of 1 copy each of membrane proteins PsbA, PsbB, PsbC, PsbD, PsbE, PsbF, PsbH, PsbI, PsbJ, PsbK, PsbL, PsbM, PsbT, PsbX, PsbY, Psb30/Ycf12, peripheral proteins PsbO, CyanoQ (PsbQ), PsbU, PsbV and a large number of cofactors. It forms dimeric complexes.

It localises to the cellular thylakoid membrane. In terms of biological role, one of the components of the core complex of photosystem II (PSII), required for its stability and/or assembly. PSII is a light-driven water:plastoquinone oxidoreductase that uses light energy to abstract electrons from H(2)O, generating O(2) and a proton gradient subsequently used for ATP formation. It consists of a core antenna complex that captures photons, and an electron transfer chain that converts photonic excitation into a charge separation. This is Photosystem II reaction center protein H from Prochlorococcus marinus (strain NATL1A).